A 143-amino-acid chain; its full sequence is Large ribosomal subunit protein uL11 (143 aa).

The protein belongs to the universal ribosomal protein uL11 family. In terms of assembly, part of the ribosomal stalk of the 50S ribosomal subunit. Interacts with L10 and the large rRNA to form the base of the stalk. L10 forms an elongated spine to which L12 dimers bind in a sequential fashion forming a multimeric L10(L12)X complex. One or more lysine residues are methylated.

Functionally, forms part of the ribosomal stalk which helps the ribosome interact with GTP-bound translation factors. The protein is Large ribosomal subunit protein uL11 of Bordetella parapertussis (strain 12822 / ATCC BAA-587 / NCTC 13253).